The following is a 94-amino-acid chain: Surfactant-associated protein 3 (94 aa).

In terms of tissue distribution, found in lung alveolar cells type I and II, as well as alveolar macrophages (at protein level). Detected also in testis and kidney. Expressed by different tissues of the ocular system like cornea, conjuctiva, lacrimal gland, eyelid and efferent tear ducts (at protein level). From these tissues is secreted into the tear film (at protein level).

It localises to the cytoplasm. Its subcellular location is the secreted. Functionally, putative surfactant protein. May be involved in wound healing and in the reduction of the surface tension at the ocular surface. The polypeptide is Surfactant-associated protein 3 (SFTA3) (Homo sapiens (Human)).